The primary structure comprises 314 residues: Acetaldehyde dehydrogenase (314 aa).

Position 14–17 (14–17 (SGNI)) interacts with NAD(+). Cysteine 132 serves as the catalytic Acyl-thioester intermediate. NAD(+) is bound by residues 163-171 (SAGPGTRAN) and asparagine 291.

This sequence belongs to the acetaldehyde dehydrogenase family.

The catalysed reaction is acetaldehyde + NAD(+) + CoA = acetyl-CoA + NADH + H(+). In Polaromonas sp. (strain JS666 / ATCC BAA-500), this protein is Acetaldehyde dehydrogenase.